The primary structure comprises 348 residues: Sex-lethal homolog (348 aa).

2 RRM domains span residues 110–188 and 196–276; these read TNLI…YARP and TNLY…LAEE. A compositionally biased stretch (gly residues) spans 296–310; that stretch reads GGGGGGGGGGGGGMG. The tract at residues 296 to 317 is disordered; that stretch reads GGGGGGGGGGGGGMGGPPPPPM.

It is found in the nucleus. Functionally, unknown; apparently not involved in somatic sex determination. In Ceratitis capitata (Mediterranean fruit fly), this protein is Sex-lethal homolog (SXL).